The chain runs to 560 residues: Protein AATF (560 aa).

N-acetylalanine is present on A2. S61 and S63 each carry phosphoserine. The tract at residues 76 to 208 is disordered; that stretch reads TSRKAWNEDH…GDRNSEDDGV (133 aa). A compositionally biased stretch (acidic residues) spans 94 to 129; that stretch reads SDEEISDEEGSGDEDSEGLGLEEYDEDDLGAAEEQE. A phosphoserine mark is found at S150 and S155. Residues 156 to 165 show a composition bias toward basic and acidic residues; the sequence is DFEKFTKGMD. Over residues 168–195 the composition is skewed to acidic residues; the sequence is GSSEEEEDEESGMEEGDDAEDSQGESEE. Phosphoserine is present on residues S203, S273, S316, S320, and S321. The interval 273 to 315 is POLR2J binding; sequence SALKNSHKALKALLRSLVGLQEELLFQYPDTRYLVDGTKPNAG. The tract at residues 309–333 is disordered; it reads GTKPNAGSEEISSEDDELVEEKKQQ. Residues 316 to 372 are RB1 binding; it reads SEEISSEDDELVEEKKQQRRRVPAKRKLEMEDYPSFMAKRFADFTVYRNRTLQKWHD. The segment at 373-472 is RB1 and SP1 binding; it reads KTKLASGKLG…FYHQLLRELI (100 aa).

This sequence belongs to the AATF family. As to quaternary structure, part of the small subunit (SSU) processome, composed of more than 70 proteins and the RNA chaperone small nucleolar RNA (snoRNA) U3. Interacts with POLR2J, RB1/RB, RBL1/P107 and RBL2/P130. Interacts with PAWR and SP1. May also bind MAPT. In terms of processing, hyperphosphorylated during the G1/S phase transition. In terms of tissue distribution, ubiquitously expressed. Expressed at high levels in brain, heart, kidney, placenta and thymus.

It is found in the nucleus. The protein localises to the nucleolus. In terms of biological role, part of the small subunit (SSU) processome, first precursor of the small eukaryotic ribosomal subunit. During the assembly of the SSU processome in the nucleolus, many ribosome biogenesis factors, an RNA chaperone and ribosomal proteins associate with the nascent pre-rRNA and work in concert to generate RNA folding, modifications, rearrangements and cleavage as well as targeted degradation of pre-ribosomal RNA by the RNA exosome. May function as a general inhibitor of the histone deacetylase HDAC1. Binding to the pocket region of RB1 may displace HDAC1 from RB1/E2F complexes, leading to activation of E2F target genes and cell cycle progression. Conversely, displacement of HDAC1 from SP1 bound to the CDKN1A promoter leads to increased expression of this CDK inhibitor and blocks cell cycle progression. Also antagonizes PAWR mediated induction of aberrant amyloid peptide production in Alzheimer disease (presenile and senile dementia), although the molecular basis for this phenomenon has not been described to date. This Homo sapiens (Human) protein is Protein AATF.